The following is a 119-amino-acid chain: Large ribosomal subunit protein uL22 (119 aa).

This sequence belongs to the universal ribosomal protein uL22 family. Part of the 50S ribosomal subunit.

This protein binds specifically to 23S rRNA; its binding is stimulated by other ribosomal proteins, e.g. L4, L17, and L20. It is important during the early stages of 50S assembly. It makes multiple contacts with different domains of the 23S rRNA in the assembled 50S subunit and ribosome. In terms of biological role, the globular domain of the protein is located near the polypeptide exit tunnel on the outside of the subunit, while an extended beta-hairpin is found that lines the wall of the exit tunnel in the center of the 70S ribosome. In Rickettsia peacockii (strain Rustic), this protein is Large ribosomal subunit protein uL22.